The sequence spans 449 residues: CCA-adding enzyme (449 aa).

Ser53 and Lys56 together coordinate ATP. CTP-binding residues include Ser53 and Lys56. Asp65, Asp67, and Asp119 together coordinate Mg(2+). 3 residues coordinate ATP: His142, Lys161, and Tyr170. CTP is bound by residues His142, Lys161, and Tyr170.

Belongs to the tRNA nucleotidyltransferase/poly(A) polymerase family. Archaeal CCA-adding enzyme subfamily. In terms of assembly, homodimer. Mg(2+) is required as a cofactor.

The catalysed reaction is a tRNA precursor + 2 CTP + ATP = a tRNA with a 3' CCA end + 3 diphosphate. The enzyme catalyses a tRNA with a 3' CCA end + 2 CTP + ATP = a tRNA with a 3' CCACCA end + 3 diphosphate. Its function is as follows. Catalyzes the addition and repair of the essential 3'-terminal CCA sequence in tRNAs without using a nucleic acid template. Adds these three nucleotides in the order of C, C, and A to the tRNA nucleotide-73, using CTP and ATP as substrates and producing inorganic pyrophosphate. tRNA 3'-terminal CCA addition is required both for tRNA processing and repair. Also involved in tRNA surveillance by mediating tandem CCA addition to generate a CCACCA at the 3' terminus of unstable tRNAs. While stable tRNAs receive only 3'-terminal CCA, unstable tRNAs are marked with CCACCA and rapidly degraded. The polypeptide is CCA-adding enzyme (Pyrococcus horikoshii (strain ATCC 700860 / DSM 12428 / JCM 9974 / NBRC 100139 / OT-3)).